Here is a 742-residue protein sequence, read N- to C-terminus: Ectonucleotide pyrophosphatase/phosphodiesterase 1 (742 aa).

At 1–113 (MELQNDLESL…TGFHSKVPFK (113 aa)) the chain is on the cytoplasmic side. Residues 114-134 (IIFRTLFGSLVFAIFLILMIN) form a helical membrane-spanning segment. Residues 135–742 (IAKPHHSTRV…SIDDLVDSDT (608 aa)) lie on the Extracellular side of the membrane. N-linked (GlcNAc...) asparagine glycans are attached at residues Asn-161 and Asn-204. Residues 168 to 545 (PLTIVISLDG…VFTIGSHGYD (378 aa)) form a phosphodiesterase region. Thr-219 acts as the Nucleophile in catalysis. N-linked (GlcNAc...) asparagine glycans are attached at residues Asn-264, Asn-296, and Asn-403. Residues 640–659 (EETEQDNVDNDNDDNDDGNT) are compositionally biased toward acidic residues. Disordered regions lie at residues 640–670 (EETEQDNVDNDNDDNDDGNTDEIAAMPSSSL) and 686–711 (TLLGETSPSSRSSSSSSIQASATAST). A compositionally biased stretch (low complexity) spans 691-711 (TSPSSRSSSSSSIQASATAST).

It belongs to the nucleotide pyrophosphatase/phosphodiesterase family. Autophosphorylated as part of the catalytic cycle of phosphodiesterase/pyrophosphatase activity. In terms of processing, N-glycosylated.

Its subcellular location is the membrane. It catalyses the reaction Hydrolytically removes 5'-nucleotides successively from the 3'-hydroxy termini of 3'-hydroxy-terminated oligonucleotides.. The enzyme catalyses a ribonucleoside 5'-triphosphate + H2O = a ribonucleoside 5'-phosphate + diphosphate + H(+). It carries out the reaction a 2'-deoxyribonucleoside 5'-triphosphate + H2O = a 2'-deoxyribonucleoside 5'-phosphate + diphosphate + H(+). Its function is as follows. Mediates extracellular nucleotide derived phosphate hydrolysis along with NPP2 and PHO5. This is Ectonucleotide pyrophosphatase/phosphodiesterase 1 (NPP1) from Saccharomyces cerevisiae (strain ATCC 204508 / S288c) (Baker's yeast).